A 697-amino-acid chain; its full sequence is Phosphoribosylformylglycinamidine synthase subunit PurL (697 aa).

H34 is a catalytic residue. ATP is bound by residues Y37 and K76. E78 contacts Mg(2+). Substrate is bound by residues 79–82 and R101; that span reads SHNH. Catalysis depends on H80, which acts as the Proton acceptor. Mg(2+) is bound at residue D102. A substrate-binding site is contributed by Q224. D250 is a binding site for Mg(2+). 294–296 lines the substrate pocket; that stretch reads ETQ. D472 and G509 together coordinate ATP. S512 serves as a coordination point for substrate.

It belongs to the FGAMS family. In terms of assembly, monomer. Part of the FGAM synthase complex composed of 1 PurL, 1 PurQ and 2 PurS subunits.

Its subcellular location is the cytoplasm. The enzyme catalyses N(2)-formyl-N(1)-(5-phospho-beta-D-ribosyl)glycinamide + L-glutamine + ATP + H2O = 2-formamido-N(1)-(5-O-phospho-beta-D-ribosyl)acetamidine + L-glutamate + ADP + phosphate + H(+). The protein operates within purine metabolism; IMP biosynthesis via de novo pathway; 5-amino-1-(5-phospho-D-ribosyl)imidazole from N(2)-formyl-N(1)-(5-phospho-D-ribosyl)glycinamide: step 1/2. Its function is as follows. Part of the phosphoribosylformylglycinamidine synthase complex involved in the purines biosynthetic pathway. Catalyzes the ATP-dependent conversion of formylglycinamide ribonucleotide (FGAR) and glutamine to yield formylglycinamidine ribonucleotide (FGAM) and glutamate. The FGAM synthase complex is composed of three subunits. PurQ produces an ammonia molecule by converting glutamine to glutamate. PurL transfers the ammonia molecule to FGAR to form FGAM in an ATP-dependent manner. PurS interacts with PurQ and PurL and is thought to assist in the transfer of the ammonia molecule from PurQ to PurL. The protein is Phosphoribosylformylglycinamidine synthase subunit PurL of Pyrobaculum aerophilum (strain ATCC 51768 / DSM 7523 / JCM 9630 / CIP 104966 / NBRC 100827 / IM2).